We begin with the raw amino-acid sequence, 141 residues long: Sec-independent protein translocase protein TatB (141 aa).

A helical transmembrane segment spans residues 1–21 (MFGISFSELLLVGLVALLVLG). Positions 74–141 (EAQKLLAPLT…SPPSETPRNP (68 aa)) are disordered. Residues 89-115 (QETPPPAAESPAPSVPTPPPTSTPAVP) show a composition bias toward pro residues. Over residues 116–129 (PADAAAPPAVAAST) the composition is skewed to low complexity. The segment covering 130–141 (PPSPPSETPRNP) has biased composition (pro residues).

Belongs to the TatB family. In terms of assembly, the Tat system comprises two distinct complexes: a TatABC complex, containing multiple copies of TatA, TatB and TatC subunits, and a separate TatA complex, containing only TatA subunits. Substrates initially bind to the TatABC complex, which probably triggers association of the separate TatA complex to form the active translocon.

It is found in the cell inner membrane. Functionally, part of the twin-arginine translocation (Tat) system that transports large folded proteins containing a characteristic twin-arginine motif in their signal peptide across membranes. Together with TatC, TatB is part of a receptor directly interacting with Tat signal peptides. TatB may form an oligomeric binding site that transiently accommodates folded Tat precursor proteins before their translocation. This Pseudomonas aeruginosa (strain ATCC 15692 / DSM 22644 / CIP 104116 / JCM 14847 / LMG 12228 / 1C / PRS 101 / PAO1) protein is Sec-independent protein translocase protein TatB.